Reading from the N-terminus, the 83-residue chain is Holin-like protein 24.1 (83 aa).

A coiled-coil region spans residues 1–45; the sequence is MEQMRQDIIELKQNDKSQEQRISLLERTSDRHDQQIQAVTESLSK. The chain crosses the membrane as a helical span at residues 57–77; sequence ITGAIISTLSTVVVGGILTIV.

The protein localises to the host cell inner membrane. Probably functions as a holin together with holin-like protein 26. Accumulates harmlessly in the cytoplasmic membrane until it reaches a critical concentration that triggers the formation of micron-scale pores (holes) causing host cell membrane disruption and endolysin escape into the periplasmic space. Determines the precise timing of host cell lysis. The chain is Holin-like protein 24.1 (24.1) from Bacillus subtilis (Bacteriophage SPP1).